The following is a 196-amino-acid chain: UMP-CMP kinase (196 aa).

Gly-13 to Thr-18 is an ATP binding site. Position 33 is a phosphoserine (Ser-33). The NMP stretch occupies residues Ser-33–Val-63. Arg-39 lines the a ribonucleoside 5'-phosphate pocket. An N6-acetyllysine mark is found at Lys-43 and Lys-55. Residue Lys-61–Val-63 participates in a ribonucleoside 5'-phosphate binding. A Glycyl lysine isopeptide (Lys-Gly) (interchain with G-Cter in SUMO2) cross-link involves residue Lys-73. Gly-93–Arg-96 provides a ligand contact to a ribonucleoside 5'-phosphate. Position 100 (Asn-100) interacts with CMP. N6-succinyllysine is present on Lys-106. Positions Glu-133–Asp-143 are LID. ATP is bound at residue Arg-134. A ribonucleoside 5'-phosphate-binding residues include Arg-140 and Arg-151. ATP is bound at residue Lys-179. Position 180 is a phosphoserine (Ser-180).

Belongs to the adenylate kinase family. UMP-CMP kinase subfamily. In terms of assembly, monomer. Requires Mg(2+) as cofactor.

It localises to the nucleus. The protein localises to the cytoplasm. The enzyme catalyses CMP + ATP = CDP + ADP. It catalyses the reaction dCMP + ATP = dCDP + ADP. The catalysed reaction is UMP + ATP = UDP + ADP. It carries out the reaction a 2'-deoxyribonucleoside 5'-diphosphate + ATP = a 2'-deoxyribonucleoside 5'-triphosphate + ADP. The enzyme catalyses a ribonucleoside 5'-diphosphate + ATP = a ribonucleoside 5'-triphosphate + ADP. In terms of biological role, catalyzes the phosphorylation of pyrimidine nucleoside monophosphates at the expense of ATP. Plays an important role in de novo pyrimidine nucleotide biosynthesis. Has preference for UMP and CMP as phosphate acceptors. Also displays broad nucleoside diphosphate kinase activity. The protein is UMP-CMP kinase (Cmpk1) of Mus musculus (Mouse).